Reading from the N-terminus, the 174-residue chain is MKYRLGDARVETHPDSWIAPSAAVIGKVRLDAGASVWFGAVLRGDNELIHIGEHSNVQDGSVMHTDMGYPLTLGKGVTVGHNAMLHGCSVGDYSLVGINAVILNGAKIGKYCIIGANALIPEGKEIPDGSLVMGSPGKVVRELSEPQKKMLEASAAHYVHNARRYARDLVEDPA.

The protein belongs to the gamma-class carbonic anhydrase family.

This is an uncharacterized protein from Pseudomonas aeruginosa (strain ATCC 15692 / DSM 22644 / CIP 104116 / JCM 14847 / LMG 12228 / 1C / PRS 101 / PAO1).